The primary structure comprises 335 residues: Beta-ketoacyl-[acyl-carrier-protein] synthase III (335 aa).

Catalysis depends on residues Cys119 and His261. An ACP-binding region spans residues 262-266 (QANQR). Asn291 is a catalytic residue.

It belongs to the thiolase-like superfamily. FabH family. Homodimer.

The protein localises to the cytoplasm. It catalyses the reaction malonyl-[ACP] + acetyl-CoA + H(+) = 3-oxobutanoyl-[ACP] + CO2 + CoA. The protein operates within lipid metabolism; fatty acid biosynthesis. In terms of biological role, catalyzes the condensation reaction of fatty acid synthesis by the addition to an acyl acceptor of two carbons from malonyl-ACP. Catalyzes the first condensation reaction which initiates fatty acid synthesis and may therefore play a role in governing the total rate of fatty acid production. Possesses both acetoacetyl-ACP synthase and acetyl transacylase activities. Its substrate specificity determines the biosynthesis of branched-chain and/or straight-chain of fatty acids. The polypeptide is Beta-ketoacyl-[acyl-carrier-protein] synthase III (Prochlorococcus marinus (strain MIT 9312)).